Here is a 162-residue protein sequence, read N- to C-terminus: Small ribosomal subunit protein uS5 (162 aa).

Positions 7–70 (EEKMILIRRT…YARRNMVEVP (64 aa)) constitute an S5 DRBM domain.

It belongs to the universal ribosomal protein uS5 family. In terms of assembly, part of the 30S ribosomal subunit. Contacts proteins S4 and S8.

With S4 and S12 plays an important role in translational accuracy. Its function is as follows. Located at the back of the 30S subunit body where it stabilizes the conformation of the head with respect to the body. This chain is Small ribosomal subunit protein uS5 (rpsE), found in Thermus thermophilus (strain ATCC BAA-163 / DSM 7039 / HB27).